Reading from the N-terminus, the 643-residue chain is Alpha-dioxygenase PIOX (643 aa).

His-168 (proton acceptor) is an active-site residue. Asp-169 contributes to the Ca(2+) binding site. His-173 provides a ligand contact to heme b. The Ca(2+) site is built by Thr-221, Trp-223, Asp-225, and Ser-227. Residues His-393, Arg-490, and Arg-494 each coordinate heme b.

The protein belongs to the peroxidase family. Requires heme b as cofactor. The cofactor is Ca(2+).

The catalysed reaction is hexadecanoate + O2 = (2R)-2-hydroperoxyhexadecanoate. It carries out the reaction dodecanoate + O2 = (2R)-2-hydroperoxydodecanoate. Functionally, alpha-dioxygenase that catalyzes the primary oxygenation step of a variety of 14-20 carbon fatty acids, containing up to three unsaturated bonds, into their corresponding 2R-hydroperoxides. Involved in the production of oxylipins that function in cell signaling, wound healing, and protection from infection. The alpha-oxidation pathway of fatty acids may play a role during plant developmental processes. In Pisum sativum (Garden pea), this protein is Alpha-dioxygenase PIOX.